Here is a 427-residue protein sequence, read N- to C-terminus: Tuberculostearic acid methyltransferase UfaA1 (427 aa).

This sequence belongs to the CFA/CMAS family.

The protein operates within lipid metabolism; fatty acid biosynthesis. With respect to regulation, inhibited by S-adenosyl-L-homocysteine. Functionally, involved in the biosynthesis of the tuberculostearic acid (10-methylstearic-acid or TSA), a constituent lipid of the mycobacterial cell wall. Catalyzes the transfer of the methyl group from S-adenosyl-L-methionine (SAM) to the double bond of oleic acid in phosphatidylethanolamine or phosphatidylcholine to produce TSA. This chain is Tuberculostearic acid methyltransferase UfaA1, found in Mycobacterium tuberculosis (strain ATCC 25618 / H37Rv).